Consider the following 332-residue polypeptide: ATP-dependent 6-phosphofructokinase (332 aa).

Gly-11 is a binding site for ATP. Position 21–25 (21–25) interacts with ADP; it reads RSVVR. ATP is bound by residues 72–73 and 102–105; these read RC and GDGS. Asp-103 serves as a coordination point for Mg(2+). 126–128 contacts substrate; sequence TID. The active-site Proton acceptor is Asp-128. Residue Arg-155 participates in ADP binding. Substrate-binding positions include Arg-163 and 170–172; that span reads MGR. ADP contacts are provided by residues 186-188, Arg-212, and 214-216; these read GAE and KLH. Residues Glu-223, Arg-256, and 262 to 265 each bind substrate; that span reads HIQR.

This sequence belongs to the phosphofructokinase type A (PFKA) family. ATP-dependent PFK group I subfamily. Prokaryotic clade 'B1' sub-subfamily. As to quaternary structure, homotetramer. Mg(2+) is required as a cofactor.

The protein localises to the cytoplasm. The catalysed reaction is beta-D-fructose 6-phosphate + ATP = beta-D-fructose 1,6-bisphosphate + ADP + H(+). It functions in the pathway carbohydrate degradation; glycolysis; D-glyceraldehyde 3-phosphate and glycerone phosphate from D-glucose: step 3/4. With respect to regulation, allosterically activated by ADP and other diphosphonucleosides, and allosterically inhibited by phosphoenolpyruvate. Its function is as follows. Catalyzes the phosphorylation of D-fructose 6-phosphate to fructose 1,6-bisphosphate by ATP, the first committing step of glycolysis. The polypeptide is ATP-dependent 6-phosphofructokinase (Halothermothrix orenii (strain H 168 / OCM 544 / DSM 9562)).